The chain runs to 848 residues: DNA mismatch repair protein MutS (848 aa).

Residue Gly605–Ser612 coordinates ATP.

It belongs to the DNA mismatch repair MutS family.

This protein is involved in the repair of mismatches in DNA. It is possible that it carries out the mismatch recognition step. This protein has a weak ATPase activity. The sequence is that of DNA mismatch repair protein MutS from Leptospira borgpetersenii serovar Hardjo-bovis (strain JB197).